The primary structure comprises 146 residues: Leghemoglobin Lb120-8 (146 aa).

A Globin domain is found at 2–146 (GFTEKQEALV…LASAIKKAMN (145 aa)). Nitrated tyrosine occurs at positions 24 and 29. Ser-44 contacts heme b. Ser-44 is modified (phosphoserine). His-61 lines the O2 pocket. Heme b is bound by residues Lys-64, His-93, and Lys-96. The residue at position 134 (Tyr-134) is a Nitrated tyrosine.

Belongs to the plant globin family. As to quaternary structure, monomer. Nitrated in effective nodules and particularly in hypoxic conditions; this mechanism may play a protective role in the symbiosis by buffering toxic peroxynitrite NO(2)(-). Nitration level decrease during nodule senescence. Post-translationally, phosphorylation at Ser-44 disrupts the molecular environment of its porphyrin ring oxygen binding pocket, thus leading to a reduced oxygen consumption and to the delivery of oxygen O(2) to symbiosomes. As to expression, root nodules.

It is found in the cytoplasm. The protein resides in the cytosol. It localises to the nucleus. In terms of biological role, leghemoglobin that reversibly binds oxygen O(2) through a pentacoordinated heme iron. In root nodules, facilitates the diffusion of oxygen to the bacteroids while preventing the bacterial nitrogenase from being inactivated by buffering dioxygen, nitric oxide and carbon monoxide, and promoting the formation of reactive oxygen species (ROS, e.g. H(2)O(2)). This role is essential for symbiotic nitrogen fixation (SNF). The polypeptide is Leghemoglobin Lb120-8 (Pisum sativum (Garden pea)).